The primary structure comprises 177 residues: Protein-export protein SecB (177 aa).

The protein belongs to the SecB family. As to quaternary structure, homotetramer, a dimer of dimers. One homotetramer interacts with 1 SecA dimer.

It is found in the cytoplasm. Functionally, one of the proteins required for the normal export of preproteins out of the cell cytoplasm. It is a molecular chaperone that binds to a subset of precursor proteins, maintaining them in a translocation-competent state. It also specifically binds to its receptor SecA. The polypeptide is Protein-export protein SecB (Ehrlichia canis (strain Jake)).